The chain runs to 553 residues: Efflux pump alnA (553 aa).

Positions 1–21 (MSSDDTVKQEHSCSADSEKQD) are enriched in basic and acidic residues. The interval 1-36 (MSSDDTVKQEHSCSADSEKQDSSCASDNEQPKEPQS) is disordered. 13 consecutive transmembrane segments (helical) span residues 40-60 (IHGL…FLFA), 85-105 (WSGV…LQIF), 110-130 (IKWM…ICGA), 136-156 (MLIG…VGVM), 174-194 (AMGL…GAFT), 202-222 (WSFY…IFLL), 243-263 (LVGT…INFA), 270-290 (SEPG…VFGI), 319-339 (LLFV…YVIP), 355-375 (VRLL…GYLA), 382-402 (IPWY…MYTI), 413-433 (GYSS…HAVA), and 522-542 (TYIL…GMKW).

The protein belongs to the major facilitator superfamily. TCR/Tet family.

The protein localises to the cell membrane. Functionally, efflux pump; part of the gene cluster that mediates the biosynthesis of asperlin, a polyketide showing anti-inflammatory, antitumor and antibiotic activities. Is probably involved in the efflux of asperlin. This chain is Efflux pump alnA, found in Emericella nidulans (strain FGSC A4 / ATCC 38163 / CBS 112.46 / NRRL 194 / M139) (Aspergillus nidulans).